Consider the following 571-residue polypeptide: Proline--tRNA ligase (571 aa).

It belongs to the class-II aminoacyl-tRNA synthetase family. ProS type 1 subfamily. Homodimer.

Its subcellular location is the cytoplasm. It catalyses the reaction tRNA(Pro) + L-proline + ATP = L-prolyl-tRNA(Pro) + AMP + diphosphate. Catalyzes the attachment of proline to tRNA(Pro) in a two-step reaction: proline is first activated by ATP to form Pro-AMP and then transferred to the acceptor end of tRNA(Pro). As ProRS can inadvertently accommodate and process non-cognate amino acids such as alanine and cysteine, to avoid such errors it has two additional distinct editing activities against alanine. One activity is designated as 'pretransfer' editing and involves the tRNA(Pro)-independent hydrolysis of activated Ala-AMP. The other activity is designated 'posttransfer' editing and involves deacylation of mischarged Ala-tRNA(Pro). The misacylated Cys-tRNA(Pro) is not edited by ProRS. The chain is Proline--tRNA ligase from Vibrio parahaemolyticus serotype O3:K6 (strain RIMD 2210633).